The following is a 141-amino-acid chain: Nucleoside triphosphatase NudI (141 aa).

The Nudix hydrolase domain occupies 1–141 (MRQRTIVCPL…RKTLSLKGLL (141 aa)). The short motif at 38 to 59 (GGVEPGERIEDALRREIREELG) is the Nudix box element.

Belongs to the Nudix hydrolase family. NudI subfamily. In terms of assembly, monomer. Requires Mg(2+) as cofactor.

The enzyme catalyses a ribonucleoside 5'-triphosphate + H2O = a ribonucleoside 5'-phosphate + diphosphate + H(+). The catalysed reaction is a 2'-deoxyribonucleoside 5'-triphosphate + H2O = a 2'-deoxyribonucleoside 5'-phosphate + diphosphate + H(+). It carries out the reaction dUTP + H2O = dUMP + diphosphate + H(+). It catalyses the reaction dTTP + H2O = dTMP + diphosphate + H(+). The enzyme catalyses dCTP + H2O = dCMP + diphosphate + H(+). Its function is as follows. Catalyzes the hydrolysis of nucleoside triphosphates, with a preference for pyrimidine deoxynucleoside triphosphates (dUTP, dTTP and dCTP). This is Nucleoside triphosphatase NudI from Escherichia fergusonii (strain ATCC 35469 / DSM 13698 / CCUG 18766 / IAM 14443 / JCM 21226 / LMG 7866 / NBRC 102419 / NCTC 12128 / CDC 0568-73).